The primary structure comprises 360 residues: G-box-binding factor 2 (360 aa).

The segment covering 1 to 16 has biased composition (polar residues); sequence MGSNEEGNPTNNSDKP. Disordered regions lie at residues 1–26 and 150–275; these read MGSNEEGNPTNNSDKPSQAAAPEQSN and KVGS…AETE. The span at 164-184 shows a compositional bias: low complexity; that stretch reads SQSSENDGSSNGSDGNTTGGE. The span at 198 to 208 shows a compositional bias: polar residues; sequence TGERPSSQNSL. Residues 246–264 are compositionally biased toward basic and acidic residues; the sequence is NEKEVKREKRKQSNRESAR. Positions 249–312 constitute a bZIP domain; sequence EVKREKRKQS…EKLRLENEAI (64 aa). Residues 251 to 270 are basic motif; that stretch reads KREKRKQSNRESARRSRLRK. The interval 277–312 is leucine-zipper; sequence LSVKVDALVAENMSLRSKLGQLNNESEKLRLENEAI. Over residues 335–352 the composition is skewed to polar residues; the sequence is NSVSGSKTVQHQLLNASP. Positions 335–360 are disordered; that stretch reads NSVSGSKTVQHQLLNASPITDPVAAS.

This sequence belongs to the bZIP family. DNA-binding heterodimer. Interacts with GBF4. Interacts with BZIP16 and BZIP68. Found in both light and dark grown leaves.

It is found in the nucleus. In terms of biological role, binds to the G-box motif (5'-CCACGTGG-3') of the rbcS-1A gene promoter. G-box and G-box-like motifs are cis-acting elements defined in promoters of certain plant genes which are regulated by such diverse stimuli as light-induction or hormone control. GBF2 is found to bind asymmetrically to the G-box. The polypeptide is G-box-binding factor 2 (GBF2) (Arabidopsis thaliana (Mouse-ear cress)).